The sequence spans 521 residues: Protein PLM2 (521 aa).

Positions 1–63 (MSHLFPPSSP…SIGRQSSPVK (63 aa)) are disordered. A compositionally biased stretch (polar residues) spans 51–63 (PSSSIGRQSSPVK). The 55-residue stretch at 102–156 (LAIGRKKSVCNIILPCRKNISRQHAFISYAADRNEIKLECNGTNGLSVHLPYSMQ) folds into the FHA domain. 4 positions are modified to phosphoserine: S281, S295, S302, and S384.

This sequence belongs to the PLM2/TOS4 family. In terms of processing, phosphorylated by CDC28.

It localises to the nucleus. Functionally, binds to the promoters of genes with functions important for the G1/S (start) transition; primarily genes involved in DNA synthesis and repair, chromosome segregation, nuclear division and transcription. The protein is Protein PLM2 (PLM2) of Saccharomyces cerevisiae (strain ATCC 204508 / S288c) (Baker's yeast).